Here is a 61-residue protein sequence, read N- to C-terminus: [Val1,Thr6]-bradykinyl-Gln,Ser (61 aa).

A signal peptide spans 1–22; the sequence is MSILKKSLFLVLFLGLVSFSIC. Positions 23–50 are excised as a propeptide; the sequence is EEEKREAEEEENEDEIEEQSEEKKRFEP. The tract at residues 25–61 is disordered; sequence EKREAEEEENEDEIEEQSEEKKRFEPVPPGFTPFRQS. Positions 30-42 are enriched in acidic residues; sequence EEEENEDEIEEQS. Residue proline 52 is modified to 4-hydroxyproline; in form [Val1,Hyp2,Thr6]-Bradykinyl-Gln,Ser and [Val1,Hyp2,Thr6]-Bradykinin.

This sequence belongs to the frog skin active peptide (FSAP) family. Bradykinin-related peptide subfamily. As to expression, expressed by the skin glands.

It is found in the secreted. Its function is as follows. Induces contraction of rat ileum smooth muscle (EC(50)=2.73 uM) but has no activity towards smooth muscle from tail artery, urinary bladder or uterus up to concentrations of 100 uM. Binds to both bradykinin receptor B1 (BDKRB1) and B2 (BDKRB2); the effect via BDKRB1 is stronger. In terms of biological role, [Val1,Hyp2,Thr6]-bradykinin-Gln,Ser: Induces contraction of rat ileum smooth muscle (EC(50)=710 nM) but has no activity towards smooth muscle from tail artery, urinary bladder or uterus up to concentrations of 100 uM. Binds to both bradykinin receptor B1 (BDKRB1) and B2 (BDKRB2); the effect via BDKRB1 is stronger. Induces contraction of guinea pig ileum smooth muscle. In Pithecopus hypochondrialis (Orange-legged leaf frog), this protein is [Val1,Thr6]-bradykinyl-Gln,Ser.